The primary structure comprises 429 residues: 3-phosphoshikimate 1-carboxyvinyltransferase (429 aa).

3-phosphoshikimate contacts are provided by K11, S12, and R16. A phosphoenolpyruvate-binding site is contributed by K11. 2 residues coordinate phosphoenolpyruvate: G82 and R110. 3-phosphoshikimate-binding residues include S155, Q157, D302, and K329. Q157 lines the phosphoenolpyruvate pocket. D302 functions as the Proton acceptor in the catalytic mechanism. Phosphoenolpyruvate contacts are provided by R333 and R385.

Belongs to the EPSP synthase family. Monomer.

The protein localises to the cytoplasm. The catalysed reaction is 3-phosphoshikimate + phosphoenolpyruvate = 5-O-(1-carboxyvinyl)-3-phosphoshikimate + phosphate. Its pathway is metabolic intermediate biosynthesis; chorismate biosynthesis; chorismate from D-erythrose 4-phosphate and phosphoenolpyruvate: step 6/7. Its function is as follows. Catalyzes the transfer of the enolpyruvyl moiety of phosphoenolpyruvate (PEP) to the 5-hydroxyl of shikimate-3-phosphate (S3P) to produce enolpyruvyl shikimate-3-phosphate and inorganic phosphate. The protein is 3-phosphoshikimate 1-carboxyvinyltransferase of Helicobacter pylori (strain G27).